We begin with the raw amino-acid sequence, 451 residues long: MPREIITLQLGQCGNQIGFEFWKQLCAEHGISPEGIVEEFATEGTDRKDVFFYQADDEHYIPRAVLLDLEPRVIHSILNSSYAKLYNPENIYLSEHGGGAGNNWASGFSQGEKIHEDIFDIIDREADGSDSLEGFVLCHSIAGGTGSGLGSYLLERLNDRYPKKLVQTYSVFPNQDEMSDVVVQPYNSLLTLKRLTQNADCVVVLDNTALNLIATDRLHIQNPSFSQINQLVSTIMSASTTTLRYPGYMNNDLIGLIASLIPTPRLHFLMTGYTPLTTDQSVASVRKTTVLDVMRRLLQPKNVMVSTGRDRQTNHCYIAILNIIQGEVDPTQVHKSLQRIRERKLANFIPWGPASIQVALSRKSPYLPSAHRVSGLMMANHTSISSLFERTCRQFDKLRKREAFMEQFRKEDIFKDNFDEMDTSREIVQQLIDEYHAATRPDYISWGTQEQ.

Serine 131 is modified (phosphoserine; by BRSK1). Residue 142–148 (AGGTGSG) participates in GTP binding.

This sequence belongs to the tubulin family. Component of the gamma-tubulin ring complex (gTuRC) consisting of TUBGCP2, TUBGCP3, TUBGCP4, TUBGCP5 and TUBGCP6 and gamma-tubulin TUBG1 or TUBG2. TUBGCP2, TUBGCP3, TUBGCP4, TUBGCP5 and TUBGCP6 assemble in a 5:5:2:1:1 stoichiometry; each is associated with a gamma-tubulin, thereby arranging 14 gamma-tubulins in a helical manner. Gamma-tubulin at the first position is blocked by TUBGCP3 at the last position, allowing 13 protafilaments to grow into a microtubule. The gTuRC (via TUBGCP3 and TUBGCP6) interacts with ACTB and MZT1; the interactions form a luminal bridge that stabilizes the initial structure during complex assembly. The gTuRC (via TUBGCP2) interacts with MZT2A/MZT2B and CDK5RAP2 (via CM1 motif); the interactions play a role in gTuRC activation. Interacts with alpha-beta tubulin heterodimers; the interaction allows microtubules to nucleate from the gTuRC. Interacts with B9D2. Interacts with CDK5RAP2; the interaction is leading to centrosomal localization of TUBG1 and CDK5RAP2. Interacts with CIMAP3. Interacts with SAS6 and NUP62 at the centrosome. Interacts with EML3 (phosphorylated at 'Thr-881') and HAUS8. Interacts with DNM2; this interaction may participate in centrosome cohesion. Interacts with CCDC66. Phosphorylation at Ser-131 by BRSK1 regulates centrosome duplication, possibly by mediating relocation of gamma-tubulin and its associated proteins from the cytoplasm to the centrosome.

The protein resides in the cytoplasm. It is found in the cytoskeleton. It localises to the microtubule organizing center. The protein localises to the centrosome. Its subcellular location is the spindle. Tubulin is the major constituent of microtubules, protein filaments consisting of alpha- and beta-tubulin heterodimers. Gamma-tubulin is a key component of the gamma-tubulin ring complex (gTuRC) which mediates microtubule nucleation. The gTuRC regulates the minus-end nucleation of alpha-beta tubulin heterodimers that grow into microtubule protafilaments, a critical step in centrosome duplication and spindle formation. The polypeptide is Tubulin gamma-1 chain (Mus musculus (Mouse)).